The chain runs to 180 residues: Protein SPMIP9 (180 aa).

In terms of assembly, microtubule inner protein component of sperm flagellar doublet microtubules. As to expression, only detected after the mouse is 35 days old. Expression increases gradually from day 35 to 6 months, and remains stable after 54 days. Exclusively expressed in the epididymis and testis.

It localises to the nucleus. It is found in the cytoplasm. Its subcellular location is the cytoskeleton. The protein localises to the flagellum axoneme. Functionally, microtubule inner protein (MIP) part of the dynein-decorated doublet microtubules (DMTs) in flagella axoneme. In Mus musculus (Mouse), this protein is Protein SPMIP9 (Spmip9).